The primary structure comprises 158 residues: NAD(P)H-quinone oxidoreductase subunit N, organellar chromatophore (158 aa).

The protein belongs to the complex I NdhN subunit family. NDH-1 can be composed of about 15 different subunits; different subcomplexes with different compositions have been identified which probably have different functions.

It is found in the plastid. The protein resides in the organellar chromatophore thylakoid membrane. The catalysed reaction is a plastoquinone + NADH + (n+1) H(+)(in) = a plastoquinol + NAD(+) + n H(+)(out). It catalyses the reaction a plastoquinone + NADPH + (n+1) H(+)(in) = a plastoquinol + NADP(+) + n H(+)(out). NDH-1 shuttles electrons from an unknown electron donor, via FMN and iron-sulfur (Fe-S) centers, to quinones in the respiratory and/or the photosynthetic chain. The immediate electron acceptor for the enzyme in this species is believed to be plastoquinone. Couples the redox reaction to proton translocation, and thus conserves the redox energy in a proton gradient. The chain is NAD(P)H-quinone oxidoreductase subunit N, organellar chromatophore from Paulinella chromatophora.